Consider the following 622-residue polypeptide: MGPILERISLPEDIKKLKPSELMALAQELREYIITVASQNGGHLAPSLGVVELTIALHFVFEAPKDKIIWDVGHQAYAHKILTGRKKQFKTLRTFGGLSGFPKRDESPYDAFGVGHSSTSISAALGMALARDLKGEQYEVVAVIGDGALTGGMAFEALNHAGHLQKKLIVVVNDNEMSIAQNVGALSAYLSRIRTDPKYSRGKDELEALIKKIPHIGPTMVKIGERLKDSFKYLLVPGMLFEELGFTYLGPIDGHNIKEMIEVFSRAKTFAGPVVVHVITKKGKGYHWAEENPDGFHGVGKFYISTGEPVEAPRVSFTEVFGKALVELAQDRPEVVAITAAMPTGTGLNYFAQNYPERFYDVGIAEQHAVTMAAGMACEGLKPVVAIYSTFLQRSFDQIIHDVCLQNLPVVFAVDRAGIVGEDGPTHHGIFDLSYLRMIPNLTIMVPRNEDMLRKMLFTALNHSGPVALRYPRGAAVGVELTPYEQLPIGTAEILKEGSDGVVIGVGRPLNYALKAAQKLENEGISLTVIDARFVKPLDYKLLEEVGSLHKPVITVEENVVAGGFGSAVNEYFSFRGIGTKVVNLGIADEFPPHGKVEEILNLYGLTEEKLYLKFREILSKL.

Residues His-74 and 115 to 117 contribute to the thiamine diphosphate site; that span reads GHS. Asp-146 lines the Mg(2+) pocket. Thiamine diphosphate contacts are provided by residues 147–148, Asn-175, Tyr-286, and Glu-366; that span reads GA. Position 175 (Asn-175) interacts with Mg(2+).

This sequence belongs to the transketolase family. DXPS subfamily. As to quaternary structure, homodimer. Mg(2+) is required as a cofactor. It depends on thiamine diphosphate as a cofactor.

It carries out the reaction D-glyceraldehyde 3-phosphate + pyruvate + H(+) = 1-deoxy-D-xylulose 5-phosphate + CO2. Its pathway is metabolic intermediate biosynthesis; 1-deoxy-D-xylulose 5-phosphate biosynthesis; 1-deoxy-D-xylulose 5-phosphate from D-glyceraldehyde 3-phosphate and pyruvate: step 1/1. Catalyzes the acyloin condensation reaction between C atoms 2 and 3 of pyruvate and glyceraldehyde 3-phosphate to yield 1-deoxy-D-xylulose-5-phosphate (DXP). In Carboxydothermus hydrogenoformans (strain ATCC BAA-161 / DSM 6008 / Z-2901), this protein is 1-deoxy-D-xylulose-5-phosphate synthase.